The chain runs to 674 residues: Methionine--tRNA ligase (674 aa).

The 'HIGH' region motif lies at 11-21 (PYANGDLHLGH). Zn(2+) is bound by residues Cys-142, Cys-145, Cys-155, and Cys-158. The 'KMSKS' region motif lies at 330 to 334 (KMSKS). Lys-333 is an ATP binding site. The region spanning 574–674 (DFMKVDLRIA…EGAQPGMRVK (101 aa)) is the tRNA-binding domain.

The protein belongs to the class-I aminoacyl-tRNA synthetase family. MetG type 1 subfamily. As to quaternary structure, homodimer. Zn(2+) serves as cofactor.

It localises to the cytoplasm. The catalysed reaction is tRNA(Met) + L-methionine + ATP = L-methionyl-tRNA(Met) + AMP + diphosphate. In terms of biological role, is required not only for elongation of protein synthesis but also for the initiation of all mRNA translation through initiator tRNA(fMet) aminoacylation. The protein is Methionine--tRNA ligase of Francisella tularensis subsp. tularensis (strain WY96-3418).